A 2496-amino-acid polypeptide reads, in one-letter code: Hornerin (2496 aa).

Positions 1-81 (MPKLLESIVT…TEYLLMILKL (81 aa)) are S-100-like. 2 EF-hand domains span residues 13 to 48 (DVFY…LKNP) and 49 to 84 (DDPD…LTKA). Residues methionine 27, glutamate 32, aspartate 62, aspartate 64, asparagine 66, lysine 68, and glutamate 73 each contribute to the Ca(2+) site. Residues 82–98 (TKACNKIIGKDYCQASG) form a s (spacer) region. Residues 97–2496 (SGSKQKNHSH…SGQTSGCGSG (2400 aa)) are disordered. Residues 99–145 (SKQKNHSHQHQEEQSKKETENKEQKGSISSSAGENDSYSRGSRGSNK) form a 1; truncated repeat. Residues 107–123 (QHQEEQSKKETENKEQK) are compositionally biased toward basic and acidic residues. A compositionally biased stretch (polar residues) spans 124–134 (GSISSSAGEND). The span at 144-153 (NKSKSKKLRK) shows a compositional bias: basic residues. A run of 27 repeats spans residues 146–231 (SKSK…NGKH), 232–321 (GSSS…FGSS), 326–400 (SGQS…SEQY), 401–491 (GASS…SCCG), 492–577 (QSSG…SGRY), 578–668 (GASS…SGSR), 669–748 (HGSG…SGRC), 749–839 (GASS…SCCG), 840–926 (QSSG…SGRY), 927–1017 (GASS…SGSR), 1018–1097 (HGSG…SGRC), 1098–1188 (GASS…SCCG), 1189–1274 (QSSG…SGRY), 1275–1365 (GASS…SGSR), 1366–1445 (HGSG…SGRC), 1446–1536 (GASS…SCCG), 1537–1622 (QSSG…SGRY), 1623–1713 (GASS…SGSR), 1714–1793 (HGSG…SGRC), 1794–1884 (GASS…SCCG), 1885–1970 (QSSG…SGRY), 1971–2061 (GASS…SGSR), 2062–2141 (HGSG…SGRC), 2142–2232 (GASS…SGSR), 2233–2312 (HGSG…SGRY), 2313–2403 (GASS…SGSR), and 2410–2496 (QFPI…CGSG). 3 stretches are compositionally biased toward low complexity: residues 183–194 (SGFSNSSGNGRP), 200–246 (SGFP…SGHS), and 270–286 (RESS…SEEP). Composition is skewed to polar residues over residues 294-319 (RKNS…QGFG) and 326-355 (SGQS…SSES). Low complexity-rich tracts occupy residues 362-379 (VSGS…STSG), 394-415 (SSGS…SGQS), and 423-448 (SGSR…QQFG). Residues 449–464 (SGSGRSSGFSQGGSGQ) are compositionally biased toward gly residues. Low complexity predominate over residues 465–565 (GRSSRGGQQG…GQTSSSTRQG (101 aa)). Phosphoserine is present on residues serine 506 and serine 508. Positions 566–576 (SGQGQASGSGR) are enriched in gly residues. Composition is skewed to low complexity over residues 577–593 (YGAS…GQST) and 600–625 (SGSR…QRYG). A compositionally biased stretch (gly residues) spans 626 to 641 (SGSGESSGFSQGGSGQ). Low complexity-rich tracts occupy residues 642 to 670 (GRSS…SRHG) and 679 to 713 (SGQQ…GSGS). Position 646 is an omega-N-methylarginine (arginine 646). Serine 716 is modified (phosphoserine). Positions 723–736 (GSTSGQTASSTRQG) are enriched in low complexity. Residues 737–747 (SGQGQASGSGR) are compositionally biased toward gly residues. 4 stretches are compositionally biased toward low complexity: residues 748–764 (CGAS…GQST), 771–796 (SGSR…QRFG), 804–884 (GFSQ…SRPA), and 891–914 (SGRS…TRQG). Phosphoserine is present on serine 815. Positions 915–925 (SGQGQASGSGR) are enriched in gly residues. Low complexity-rich tracts occupy residues 926–942 (YGAS…GQST) and 949–974 (SGSR…QRYG). The span at 975-990 (SGSGESSGFSQGGSGQ) shows a compositional bias: gly residues. Composition is skewed to low complexity over residues 991–1019 (GRSS…SRHG), 1028–1062 (SGQQ…GSGS), and 1072–1085 (GSTS…TRQG). Arginine 995 carries the omega-N-methylarginine modification. A compositionally biased stretch (gly residues) spans 1086–1096 (SGQGQASGSGR). Low complexity-rich tracts occupy residues 1097 to 1113 (CGAS…GQST), 1120 to 1145 (SGSR…QRFG), and 1153 to 1262 (GFSQ…TRQG). Serine 1229 carries the phosphoserine modification. The span at 1263-1273 (SGQGQASGSGR) shows a compositional bias: gly residues. Polar residues predominate over residues 1281–1292 (TSGCRSGQSTRY). A compositionally biased stretch (low complexity) spans 1298 to 1322 (GSRNSSTQSRGRSTSRESSTSQRYG). Positions 1323–1338 (SGSGESSGFSQGGSGQ) are enriched in gly residues. 3 stretches are compositionally biased toward low complexity: residues 1339 to 1367 (GRSS…SRHG), 1376 to 1410 (SGQQ…GSGS), and 1420 to 1433 (GSTS…TRQG). Arginine 1343 is subject to Omega-N-methylarginine. A compositionally biased stretch (gly residues) spans 1434 to 1444 (SGQGQASGSGR). Composition is skewed to low complexity over residues 1445–1461 (CGAS…GQST), 1468–1493 (SGSR…QRFG), and 1501–1610 (GFSQ…TRQG). Phosphoserine is present on residues serine 1551 and serine 1553. Gly residues predominate over residues 1611–1621 (SGQGQASGSGR). Composition is skewed to low complexity over residues 1622–1631 (YGASSGQTSG) and 1645–1670 (SGSR…QRCG). Position 1650 is a phosphoserine (serine 1650). Over residues 1671–1686 (SGSGESSGFSQGGSGQ) the composition is skewed to gly residues. 3 stretches are compositionally biased toward low complexity: residues 1687-1715 (GRSS…SRHG), 1724-1758 (SGQQ…GSGS), and 1768-1781 (GSTS…TRQG). Arginine 1691 carries the omega-N-methylarginine modification. Over residues 1782-1792 (SGQGQASGSGR) the composition is skewed to gly residues. A compositionally biased stretch (polar residues) spans 1800–1811 (TSGCGSDQSTRY). Low complexity-rich tracts occupy residues 1816–1841 (SGSR…QRFG) and 1849–1958 (GFSQ…TRQG). The segment covering 1959 to 1969 (SGQGQASGSGR) has biased composition (gly residues). Composition is skewed to low complexity over residues 1970-1986 (YGAS…GQST) and 1993-2018 (SGSR…QRYG). The residue at position 2011 (serine 2011) is a Phosphoserine. Positions 2019 to 2034 (SGSGESSGFSQGGSGQ) are enriched in gly residues. Low complexity-rich tracts occupy residues 2035 to 2063 (GRSS…SRHG) and 2072 to 2106 (SGQQ…GSGS). Arginine 2039 carries the omega-N-methylarginine modification. Serine 2109 and serine 2124 each carry phosphoserine. Residues 2116-2129 (GSTSGQTASSTRQG) are compositionally biased toward low complexity. Residues 2130–2140 (SGQGQASGSGR) show a composition bias toward gly residues. Low complexity-rich tracts occupy residues 2141 to 2157 (CGAS…GQST) and 2164 to 2189 (SGSR…QRYG). A compositionally biased stretch (gly residues) spans 2190-2205 (SGSGESSGFSQGGSGQ). 2 stretches are compositionally biased toward low complexity: residues 2206–2234 (GRSS…SRHG) and 2243–2300 (SGQQ…TRQG). Omega-N-methylarginine is present on arginine 2210. Positions 2301–2311 (SGQGQASGSGR) are enriched in gly residues. Low complexity-rich tracts occupy residues 2312–2328 (YGAS…GQST) and 2335–2360 (SGSR…QRYG). Serine 2353 carries the post-translational modification Phosphoserine. Gly residues predominate over residues 2361-2376 (SGSGESSGFSQGGSGQ). Composition is skewed to low complexity over residues 2377 to 2405 (GRSS…SRHG), 2414 to 2448 (SGQQ…GSGS), and 2458 to 2471 (GSTS…TRQG). At arginine 2381 the chain carries Omega-N-methylarginine. The segment covering 2472-2482 (SGQGQASGSGR) has biased composition (gly residues).

The protein belongs to the S100-fused protein family. This sequence in the N-terminal section; belongs to the S-100 family. In terms of processing, processed during the process of epidermal differentiation. Post-translationally, forms covalent cross-links mediated by transglutaminase TGM3, between glutamine and the epsilon-amino group of lysine residues (in vitro). As to expression, embryonic skin. Highest level in the adult forestomach followed by the skin. Lower levels in the tongue, esophagus. Detected in the granular and cornified layers of the mature epidermis.

Its subcellular location is the cytoplasmic granule. Component of the epidermal cornified cell envelopes. The polypeptide is Hornerin (Hrnr) (Mus musculus (Mouse)).